The primary structure comprises 61 residues: Small ribosomal subunit protein uS14 (61 aa).

Zn(2+) is bound by residues C24, C27, C40, and C43.

The protein belongs to the universal ribosomal protein uS14 family. Zinc-binding uS14 subfamily. In terms of assembly, part of the 30S ribosomal subunit. Contacts proteins S3 and S10. Requires Zn(2+) as cofactor.

In terms of biological role, binds 16S rRNA, required for the assembly of 30S particles and may also be responsible for determining the conformation of the 16S rRNA at the A site. The protein is Small ribosomal subunit protein uS14 of Mycoplasma pneumoniae (strain ATCC 29342 / M129 / Subtype 1) (Mycoplasmoides pneumoniae).